Reading from the N-terminus, the 332-residue chain is Cytoskeleton protein RodZ (332 aa).

Over 1-111 (MNTETTQDTT…LKKSRKKRDG (111 aa)) the chain is Cytoplasmic. The HTH cro/C1-type domain maps to 19-71 (LREARERLGLTQQTIAERLCLKITTVRDIEDGTTPADLAPTFLRGYIRSYAKL). A DNA-binding region (H-T-H motif) is located at residues 30–49 (QQTIAERLCLKITTVRDIED). A helical; Signal-anchor for type II membrane protein transmembrane segment spans residues 112–132 (WLMIITWLVVLVVLGLTGAWW). Over 133–332 (WQNHQAQQAE…QVARLTLTAE (200 aa)) the chain is Periplasmic. Residues 149 to 225 (HASSMQSQTE…PSQANATQSQ (77 aa)) form a disordered region. 2 stretches are compositionally biased toward polar residues: residues 151-160 (SSMQSQTEGQ) and 168-182 (SAPQETSTAGSAATP). Residues 190–225 (SATIAATPSTPPSSTTASSAAPSSQSPSQANATQSQ) show a composition bias toward low complexity.

This sequence belongs to the RodZ family.

The protein localises to the cell inner membrane. In terms of biological role, cytoskeletal protein that is involved in cell-shape control through regulation of the length of the long axis. This Pectobacterium atrosepticum (strain SCRI 1043 / ATCC BAA-672) (Erwinia carotovora subsp. atroseptica) protein is Cytoskeleton protein RodZ.